A 396-amino-acid polypeptide reads, in one-letter code: Actin-related protein 6 (396 aa).

Thr2 carries the post-translational modification N-acetylthreonine. Lys260 carries the post-translational modification N6-acetyllysine.

This sequence belongs to the actin family. ARP6 subfamily. Component of the chromatin-remodeling SRCAP complex composed of at least SRCAP, DMAP1, RUVBL1, RUVBL2, ACTL6A, YEATS4, ACTR6 and ZNHIT1. Interacts with CBX1, CBX3 and CBX5.

It is found in the cytoplasm. The protein resides in the cytoskeleton. The protein localises to the nucleus. Its subcellular location is the nucleolus. Functionally, required for formation and/or maintenance of proper nucleolar structure and function. Plays a dual role in the regulation of ribosomal DNA (rDNA) transcription. In the presence of high glucose, maintains active rDNA transcription through H2A.Z deposition and under glucose starvation, is required for the repression of rDNA transcription, and this function may be independent of H2A.Z. This Mus musculus (Mouse) protein is Actin-related protein 6 (Actr6).